The chain runs to 625 residues: Serine/threonine-protein kinase PknB (625 aa).

Residues 1–331 (MTTPQHLSDR…KQRSTSVARW (331 aa)) lie on the Cytoplasmic side of the membrane. Residues 11–274 (YELGEILGFG…TAAEMRADLI (264 aa)) enclose the Protein kinase domain. Residues 17 to 25 (LGFGGMSEV), Lys-40, and 93 to 95 (EYV) contribute to the ATP site. Catalysis depends on Asp-138, which acts as the Proton acceptor. ATP is bound by residues 140-143 (KPAN) and Asp-156. Positions 143 and 156 each coordinate Mg(2+). Ser-169 carries the post-translational modification Phosphoserine; by autocatalysis. A phosphothreonine; by autocatalysis mark is found at Thr-171, Thr-173, and Thr-294. Phosphoserine; by autocatalysis is present on Ser-295. The interval 302–321 (ADRAGAATQDMPVPRPAGYS) is disordered. Thr-309 is subject to Phosphothreonine; by autocatalysis. Residues 332 to 352 (LIAVAVLAVLTVVVTVAINMV) form a helical membrane-spanning segment. Residues 353 to 625 (GGNPRNVQVP…DAKITLSFAA (273 aa)) are Extracellular-facing. PASTA domains are found at residues 355-421 (NPRN…NVST), 422-489 (GPEQ…VVGA), 490-556 (GPED…RVSK), and 557-625 (GNQF…SFAA). Residues 591–612 (DVRDSGQRTNAVVTQSPSAGTP) form a disordered region. Positions 597–611 (QRTNAVVTQSPSAGT) are enriched in polar residues.

It belongs to the protein kinase superfamily. Ser/Thr protein kinase family. As to quaternary structure, homodimer. Post-translationally, autophosphorylated. Dephosphorylated by PstP.

It localises to the cell membrane. It carries out the reaction L-seryl-[protein] + ATP = O-phospho-L-seryl-[protein] + ADP + H(+). The catalysed reaction is L-threonyl-[protein] + ATP = O-phospho-L-threonyl-[protein] + ADP + H(+). By K-252a. Functionally, protein kinase that regulates many aspects of mycobacterial physiology. Is a key component of a signal transduction pathway that regulates cell growth, cell shape and cell division via phosphorylation of target proteins. Probably phosphorylates RseA. The chain is Serine/threonine-protein kinase PknB (pknB) from Mycolicibacterium smegmatis (strain ATCC 700084 / mc(2)155) (Mycobacterium smegmatis).